A 320-amino-acid polypeptide reads, in one-letter code: Ferrochelatase (320 aa).

Positions 194 and 275 each coordinate Fe cation.

This sequence belongs to the ferrochelatase family.

It is found in the cytoplasm. The catalysed reaction is heme b + 2 H(+) = protoporphyrin IX + Fe(2+). It functions in the pathway porphyrin-containing compound metabolism; protoheme biosynthesis; protoheme from protoporphyrin-IX: step 1/1. Its function is as follows. Catalyzes the ferrous insertion into protoporphyrin IX. This is Ferrochelatase from Stenotrophomonas maltophilia (strain R551-3).